The following is a 68-amino-acid chain: Alpha-conotoxin Lp1.1 (68 aa).

The signal sequence occupies residues 1–21 (MGMRMMFIMFMLVVLATTVVT). Residues 22 to 48 (FTSDRALDAMNAAASNKASRLIALAVR) constitute a propeptide that is removed on maturation. 2 disulfides stabilise this stretch: cysteine 50–cysteine 56 and cysteine 51–cysteine 64. Positions 52–54 (ARA) are lacks the Ser-Xaa-Pro motif that is crucial for potent interaction with nAChR. Glycine 65 is subject to Glycine amide. A propeptide spanning residues 66–68 (GGR) is cleaved from the precursor.

The protein belongs to the conotoxin A superfamily. As to expression, expressed by the venom duct.

The protein localises to the secreted. Alpha-conotoxins act on postsynaptic membranes, they bind to the nicotinic acetylcholine receptors (nAChR) and thus inhibit them. Synthetic peptide inhibits alpha-6/alpha-3/beta-2 and alpha-3/beta-2 nicotinic acetylcholine receptors and causes uncoordinated movement when intramuscularly injected into goldfish. Has a distinct nAChR binding mode from other alpha-conotoxins, due to a different three residue motif (Ala-Xaa-Ala instead of the conserved Ser-Xaa-Pro motif). The sequence is that of Alpha-conotoxin Lp1.1 from Conus leopardus (Leopard cone).